The sequence spans 80 residues: Exodeoxyribonuclease 7 small subunit (80 aa).

This sequence belongs to the XseB family. As to quaternary structure, heterooligomer composed of large and small subunits.

It is found in the cytoplasm. It carries out the reaction Exonucleolytic cleavage in either 5'- to 3'- or 3'- to 5'-direction to yield nucleoside 5'-phosphates.. Its function is as follows. Bidirectionally degrades single-stranded DNA into large acid-insoluble oligonucleotides, which are then degraded further into small acid-soluble oligonucleotides. This Vibrio vulnificus (strain CMCP6) protein is Exodeoxyribonuclease 7 small subunit.